A 547-amino-acid chain; its full sequence is Glucose-6-phosphate isomerase 2 (547 aa).

Glutamate 351 (proton donor) is an active-site residue. Residues histidine 382 and lysine 508 contribute to the active site.

Belongs to the GPI family.

Its subcellular location is the cytoplasm. The catalysed reaction is alpha-D-glucose 6-phosphate = beta-D-fructose 6-phosphate. The protein operates within carbohydrate biosynthesis; gluconeogenesis. It participates in carbohydrate degradation; glycolysis; D-glyceraldehyde 3-phosphate and glycerone phosphate from D-glucose: step 2/4. Its function is as follows. Catalyzes the reversible isomerization of glucose-6-phosphate to fructose-6-phosphate. The protein is Glucose-6-phosphate isomerase 2 of Neisseria meningitidis serogroup A / serotype 4A (strain DSM 15465 / Z2491).